We begin with the raw amino-acid sequence, 535 residues long: CTP synthase (535 aa).

The interval 1 to 268 (MSTKYIFVTG…DQIVCDHLKL (268 aa)) is amidoligase domain. Residue S14 participates in CTP binding. S14 serves as a coordination point for UTP. 15 to 20 (SMGKGI) is a binding site for ATP. Residue Y55 coordinates L-glutamine. D72 contacts ATP. Mg(2+) is bound by residues D72 and E142. Residues 149–151 (DME), 189–194 (KTKIAQ), and K225 each bind CTP. UTP contacts are provided by residues 189–194 (KTKIAQ) and K225. An ATP-binding site is contributed by V243. One can recognise a Glutamine amidotransferase type-1 domain in the interval 293-535 (KIALVGKYVE…FIRVAVENSK (243 aa)). G355 provides a ligand contact to L-glutamine. Catalysis depends on C382, which acts as the Nucleophile; for glutamine hydrolysis. L-glutamine contacts are provided by residues 383–386 (LGMQ), E406, and R464. Residues H509 and E511 contribute to the active site.

The protein belongs to the CTP synthase family. Homotetramer. In contrast to E.coli CTP synthase, remains a tetramer at dilute enzyme concentrations even in the absence of Mg(2+), ATP and UTP.

It carries out the reaction UTP + L-glutamine + ATP + H2O = CTP + L-glutamate + ADP + phosphate + 2 H(+). The catalysed reaction is L-glutamine + H2O = L-glutamate + NH4(+). The enzyme catalyses UTP + NH4(+) + ATP = CTP + ADP + phosphate + 2 H(+). It participates in pyrimidine metabolism; CTP biosynthesis via de novo pathway; CTP from UDP: step 2/2. Allosterically activated by GTP, when glutamine is the substrate. GTP has no effect on the reaction when ammonia is the substrate. The allosteric effector GTP functions by stabilizing the protein conformation that binds the tetrahedral intermediate(s) formed during glutamine hydrolysis. Also activated by magnesium. Allosterically inhibited by CTP. Functionally, catalyzes the ATP-dependent amination of UTP to CTP with either L-glutamine or ammonia as the source of nitrogen. Is essential for the synthesis of CTP de novo. Contrary to other bacterial CTP synthases, the lactococcal enzyme is also able to convert dUTP to dCTP, but this reaction may not play a significant physiological role. Regulates intracellular CTP levels through interactions with the four ribonucleotide triphosphates. This is CTP synthase from Lactococcus lactis subsp. cremoris (strain MG1363).